The primary structure comprises 260 residues: MLDKVKNVIVVLSGKGGVGKSTVSTQLSLALRKNGFKVGLLDIDLCGPSVPYLLGLEGRDIFQCDEGWVPVYTDEFQTLAVMSIGFLLKNREDPVIWRGPKKTMMIRQFLTDVRWDELDYLIIDTPPGTSDEHITVMECLKEVGCHGAIIVTTPQEVALDDVRKEITFCKKTGINILGIVENMSGFVCPHCTSCTNIFSSNGGVSLATYAQVPHLGTLPIDPRVGVLAGTTTSVLDELPDSTTAEVLTHLVEKLKTMLAS.

14–21 (GKGGVGKS) lines the ATP pocket. [4Fe-4S] cluster-binding residues include C188 and C191.

This sequence belongs to the Mrp/NBP35 ATP-binding proteins family. NUBP2/CFD1 subfamily. As to quaternary structure, heterotetramer of 2 Nubp1 and 2 Nubp2 chains. [4Fe-4S] cluster serves as cofactor.

It localises to the cytoplasm. In terms of biological role, component of the cytosolic iron-sulfur (Fe/S) protein assembly (CIA) machinery. Required for maturation of extramitochondrial Fe-S proteins. The Nubp1-Nubp2 heterotetramer forms a Fe-S scaffold complex, mediating the de novo assembly of an Fe-S cluster and its transfer to target apoproteins. The protein is Cytosolic Fe-S cluster assembly factor Nubp2 homolog of Drosophila simulans (Fruit fly).